The chain runs to 458 residues: UDP-N-acetylmuramoylalanine--D-glutamate ligase (458 aa).

124–130 (GSDGKTT) serves as a coordination point for ATP.

This sequence belongs to the MurCDEF family.

The protein resides in the cytoplasm. The enzyme catalyses UDP-N-acetyl-alpha-D-muramoyl-L-alanine + D-glutamate + ATP = UDP-N-acetyl-alpha-D-muramoyl-L-alanyl-D-glutamate + ADP + phosphate + H(+). It functions in the pathway cell wall biogenesis; peptidoglycan biosynthesis. Its function is as follows. Cell wall formation. Catalyzes the addition of glutamate to the nucleotide precursor UDP-N-acetylmuramoyl-L-alanine (UMA). The protein is UDP-N-acetylmuramoylalanine--D-glutamate ligase of Clostridium botulinum (strain Kyoto / Type A2).